Consider the following 338-residue polypeptide: Biotin synthase (338 aa).

The Radical SAM core domain maps to 63 to 290; it reads NGVQLSTLLS…RAKVRLSAGR (228 aa). The [4Fe-4S] cluster site is built by Cys-78, Cys-82, and Cys-85. The [2Fe-2S] cluster site is built by Cys-122, Cys-153, Cys-213, and Arg-285.

The protein belongs to the radical SAM superfamily. Biotin synthase family. Homodimer. [4Fe-4S] cluster serves as cofactor. The cofactor is [2Fe-2S] cluster.

It catalyses the reaction (4R,5S)-dethiobiotin + (sulfur carrier)-SH + 2 reduced [2Fe-2S]-[ferredoxin] + 2 S-adenosyl-L-methionine = (sulfur carrier)-H + biotin + 2 5'-deoxyadenosine + 2 L-methionine + 2 oxidized [2Fe-2S]-[ferredoxin]. Its pathway is cofactor biosynthesis; biotin biosynthesis; biotin from 7,8-diaminononanoate: step 2/2. Functionally, catalyzes the conversion of dethiobiotin (DTB) to biotin by the insertion of a sulfur atom into dethiobiotin via a radical-based mechanism. The protein is Biotin synthase of Nitrosomonas eutropha (strain DSM 101675 / C91 / Nm57).